A 101-amino-acid chain; its full sequence is NAD(P)H-quinone oxidoreductase subunit 4L, chloroplastic (101 aa).

A run of 3 helical transmembrane segments spans residues 2 to 22, 32 to 52, and 61 to 81; these read MLEH…YGLI, MCLE…SDLF, and VFSI…PAIV.

The protein belongs to the complex I subunit 4L family. NDH is composed of at least 16 different subunits, 5 of which are encoded in the nucleus.

Its subcellular location is the plastid. It is found in the chloroplast thylakoid membrane. It catalyses the reaction a plastoquinone + NADH + (n+1) H(+)(in) = a plastoquinol + NAD(+) + n H(+)(out). It carries out the reaction a plastoquinone + NADPH + (n+1) H(+)(in) = a plastoquinol + NADP(+) + n H(+)(out). Its function is as follows. NDH shuttles electrons from NAD(P)H:plastoquinone, via FMN and iron-sulfur (Fe-S) centers, to quinones in the photosynthetic chain and possibly in a chloroplast respiratory chain. The immediate electron acceptor for the enzyme in this species is believed to be plastoquinone. Couples the redox reaction to proton translocation, and thus conserves the redox energy in a proton gradient. This Nuphar advena (Common spatterdock) protein is NAD(P)H-quinone oxidoreductase subunit 4L, chloroplastic.